Consider the following 219-residue polypeptide: tRNA (guanine-N(7)-)-methyltransferase (219 aa).

Residues Glu43, Asp68, Glu101, and Asn124 each coordinate S-adenosyl-L-methionine. Substrate is bound by residues Lys128 and Asp160.

It belongs to the class I-like SAM-binding methyltransferase superfamily. TrmB family.

It carries out the reaction guanosine(46) in tRNA + S-adenosyl-L-methionine = N(7)-methylguanosine(46) in tRNA + S-adenosyl-L-homocysteine. It participates in tRNA modification; N(7)-methylguanine-tRNA biosynthesis. Functionally, catalyzes the formation of N(7)-methylguanine at position 46 (m7G46) in tRNA. In Clostridium beijerinckii (strain ATCC 51743 / NCIMB 8052) (Clostridium acetobutylicum), this protein is tRNA (guanine-N(7)-)-methyltransferase.